A 542-amino-acid chain; its full sequence is Chaperonin GroEL (542 aa).

Residues 29 to 32 (TLGP), 86 to 90 (DGTTT), G413, 476 to 478 (NAA), and D492 contribute to the ATP site. The interval 521 to 542 (QPDENGPAAGPDMGMGGMGGMM) is disordered. The span at 533–542 (MGMGGMGGMM) shows a compositional bias: gly residues.

The protein belongs to the chaperonin (HSP60) family. In terms of assembly, forms a cylinder of 14 subunits composed of two heptameric rings stacked back-to-back. Interacts with the co-chaperonin GroES.

The protein resides in the cytoplasm. The enzyme catalyses ATP + H2O + a folded polypeptide = ADP + phosphate + an unfolded polypeptide.. Together with its co-chaperonin GroES, plays an essential role in assisting protein folding. The GroEL-GroES system forms a nano-cage that allows encapsulation of the non-native substrate proteins and provides a physical environment optimized to promote and accelerate protein folding. The polypeptide is Chaperonin GroEL (Listeria innocua serovar 6a (strain ATCC BAA-680 / CLIP 11262)).